The chain runs to 124 residues: Small ribosomal subunit protein uS12 (124 aa).

A 3-methylthioaspartic acid modification is found at aspartate 89.

It belongs to the universal ribosomal protein uS12 family. Part of the 30S ribosomal subunit. Contacts proteins S8 and S17. May interact with IF1 in the 30S initiation complex.

Its function is as follows. With S4 and S5 plays an important role in translational accuracy. Interacts with and stabilizes bases of the 16S rRNA that are involved in tRNA selection in the A site and with the mRNA backbone. Located at the interface of the 30S and 50S subunits, it traverses the body of the 30S subunit contacting proteins on the other side and probably holding the rRNA structure together. The combined cluster of proteins S8, S12 and S17 appears to hold together the shoulder and platform of the 30S subunit. The chain is Small ribosomal subunit protein uS12 from Campylobacter hominis (strain ATCC BAA-381 / DSM 21671 / CCUG 45161 / LMG 19568 / NCTC 13146 / CH001A).